A 356-amino-acid chain; its full sequence is S-adenosylmethionine:tRNA ribosyltransferase-isomerase (356 aa).

Belongs to the QueA family. Monomer.

It localises to the cytoplasm. It carries out the reaction 7-aminomethyl-7-carbaguanosine(34) in tRNA + S-adenosyl-L-methionine = epoxyqueuosine(34) in tRNA + adenine + L-methionine + 2 H(+). It participates in tRNA modification; tRNA-queuosine biosynthesis. In terms of biological role, transfers and isomerizes the ribose moiety from AdoMet to the 7-aminomethyl group of 7-deazaguanine (preQ1-tRNA) to give epoxyqueuosine (oQ-tRNA). This Histophilus somni (strain 2336) (Haemophilus somnus) protein is S-adenosylmethionine:tRNA ribosyltransferase-isomerase.